A 185-amino-acid chain; its full sequence is Ribosome-recycling factor (185 aa).

This sequence belongs to the RRF family.

It is found in the cytoplasm. Functionally, responsible for the release of ribosomes from messenger RNA at the termination of protein biosynthesis. May increase the efficiency of translation by recycling ribosomes from one round of translation to another. In Proteus mirabilis (strain HI4320), this protein is Ribosome-recycling factor.